Consider the following 185-residue polypeptide: Ribosome-recycling factor (185 aa).

This sequence belongs to the RRF family.

The protein localises to the cytoplasm. In terms of biological role, responsible for the release of ribosomes from messenger RNA at the termination of protein biosynthesis. May increase the efficiency of translation by recycling ribosomes from one round of translation to another. The chain is Ribosome-recycling factor from Clostridium acetobutylicum (strain ATCC 824 / DSM 792 / JCM 1419 / IAM 19013 / LMG 5710 / NBRC 13948 / NRRL B-527 / VKM B-1787 / 2291 / W).